The primary structure comprises 337 residues: D-alanine--D-alanine ligase (337 aa).

In terms of domain architecture, ATP-grasp spans 126 to 326 (KQIWISNGLS…YADLVLWLLS (201 aa)). Position 152 to 207 (152 to 207 (VKHLGLPLIVKPAHEGSSLGLTKVKSVEELPAAYQLAAGLDKKVIAETCIVGDELT)) interacts with ATP. Mg(2+) is bound by residues Asp279, Glu293, and Asn295.

This sequence belongs to the D-alanine--D-alanine ligase family. Mg(2+) is required as a cofactor. It depends on Mn(2+) as a cofactor.

The protein resides in the cytoplasm. It carries out the reaction 2 D-alanine + ATP = D-alanyl-D-alanine + ADP + phosphate + H(+). It functions in the pathway cell wall biogenesis; peptidoglycan biosynthesis. In terms of biological role, cell wall formation. In Polynucleobacter asymbioticus (strain DSM 18221 / CIP 109841 / QLW-P1DMWA-1) (Polynucleobacter necessarius subsp. asymbioticus), this protein is D-alanine--D-alanine ligase.